A 777-amino-acid polypeptide reads, in one-letter code: MANSSSRYSVLTAAHWGPMLVETDGETVFSSRGALATGMENSLQSAVRDQVHSNTRVRFPMVRKGFLASPENPQGIRGQDEFVRVSWDEALDLIHQQHKRIREAYGPASIFAGSYGWRSNGVLHKASTLLQRYMALAGGYTGHLGDYSTGAAQAIMPYVVGGSEVYQQQTSWPLVLEHSDVVVLWSANPLNTLKIAWNASDEQGLSYFSALRDSGKKLICIDPMRSETVDFFGDKMEWVAPHMGTDVALMLGIAHTLVENGWHDEAFLARCTTGYAVFASYLLGESDGIAKTAEWAAEICGVGAAKIRELAAIFHQNTTMLMAGWGMQRQQFGEQKHWMIVTLAAMLGQIGTPGGGFGLSYHFANGGNPTRRSAVLSSMQGSLPGGCDAVDKIPVARIVEALENPGGAYQHNGMNRHFPDIRFIWWAGGANFTHHQDTNRLIRAWQKPELVVISECFWTAAAKHADIVLPATTSFERNDLTMTGDYSNQHLVPMKQVVPPRYEARNDFDVFAELSERWEKGGYARFTEGKSELQWLETFYNVARQRGASQQVELPPFAEFWQANQLIEMPENPDSERFIRFADFCRDPLAHPLKTASGKIEIFSQRIADYGYPDCPGHPMWLEPDEWQGNAEPEQLQVLSAHPAHRLHSQLNYSSLRELYAVANREPVTIHPDDAQERGIQDGDTVRLWNARGQILAGAVISEGIKPGVICIHEGAWPDLDLTADGICKNGAVNVLTKDLPSSRLGNGCAGNTALAWLEKYNGPELTLTAFEPPASS.

Ser148 provides a ligand contact to Mo-bis(molybdopterin guanine dinucleotide).

It belongs to the prokaryotic molybdopterin-containing oxidoreductase family. It depends on Mo-bis(molybdopterin guanine dinucleotide) as a cofactor.

The catalysed reaction is [thioredoxin]-disulfide + L-methionine + H2O = L-methionine (S)-S-oxide + [thioredoxin]-dithiol. Its function is as follows. This enzyme may serve as a scavenger, allowing the cell to utilize biotin sulfoxide as a biotin source. It reduces a spontaneous oxidation product of biotin, D-biotin D-sulfoxide (BSO or BDS), back to biotin. Also exhibits methionine-(S)-sulfoxide (Met-S-SO) reductase activity, acting specifically on the (S) enantiomer in the free, but not the protein-bound form. It thus plays a role in assimilation of oxidized methionines. This chain is Biotin sulfoxide reductase (bisC), found in Escherichia coli (strain K12).